The primary structure comprises 91 residues: Large ribosomal subunit protein eL43 (91 aa).

The C4-type zinc-finger motif lies at 39–60 (CSFCGKDAVRRSSVGIWKCNGC).

This sequence belongs to the eukaryotic ribosomal protein eL43 family.

The sequence is that of Large ribosomal subunit protein eL43 (rpl37A) from Dictyostelium discoideum (Social amoeba).